A 970-amino-acid polypeptide reads, in one-letter code: Protein CLASP-3 (970 aa).

Disordered stretches follow at residues 314–377 (SRLA…QKAR) and 651–675 (NGISSGSGGSGNNHPKATPLRETPH). Residues 344-355 (GSRTRTSSITSN) are compositionally biased toward polar residues. The HEAT repeat unit spans residues 905 to 943 (ITPCVIKAYQSTSSSVRKTVVYCLVAMVNRVGEQRMAPH).

The protein belongs to the CLASP family.

The protein localises to the cytoplasm. It is found in the cytoskeleton. Microtubule plus-end tracking protein that promotes the stabilization of dynamic microtubules. The sequence is that of Protein CLASP-3 (cls-3) from Caenorhabditis briggsae.